Here is a 507-residue protein sequence, read N- to C-terminus: ATP synthase subunit alpha, chloroplastic (507 aa).

Residue G170–T177 coordinates ATP.

This sequence belongs to the ATPase alpha/beta chains family. As to quaternary structure, F-type ATPases have 2 components, CF(1) - the catalytic core - and CF(0) - the membrane proton channel. CF(1) has five subunits: alpha(3), beta(3), gamma(1), delta(1), epsilon(1). CF(0) has four main subunits: a, b, b' and c.

Its subcellular location is the plastid. It localises to the chloroplast thylakoid membrane. The enzyme catalyses ATP + H2O + 4 H(+)(in) = ADP + phosphate + 5 H(+)(out). Functionally, produces ATP from ADP in the presence of a proton gradient across the membrane. The alpha chain is a regulatory subunit. In Illicium oligandrum (Star anise), this protein is ATP synthase subunit alpha, chloroplastic.